Reading from the N-terminus, the 162-residue chain is Xanthine-guanine phosphoribosyltransferase (162 aa).

5-phospho-alpha-D-ribose 1-diphosphate is bound by residues 43-44 and 94-102; these read RG and DDLVDTGTT. Residue Asp95 coordinates Mg(2+). Guanine-binding residues include Asp98 and Ile141. Residues Asp98 and Ile141 each coordinate xanthine. Residues 98–102 and 140–141 contribute to the GMP site; these read DTGTT and WI.

The protein belongs to the purine/pyrimidine phosphoribosyltransferase family. XGPT subfamily. In terms of assembly, homotetramer. Requires Mg(2+) as cofactor.

It is found in the cell inner membrane. It catalyses the reaction GMP + diphosphate = guanine + 5-phospho-alpha-D-ribose 1-diphosphate. It carries out the reaction XMP + diphosphate = xanthine + 5-phospho-alpha-D-ribose 1-diphosphate. The enzyme catalyses IMP + diphosphate = hypoxanthine + 5-phospho-alpha-D-ribose 1-diphosphate. The protein operates within purine metabolism; GMP biosynthesis via salvage pathway; GMP from guanine: step 1/1. Its pathway is purine metabolism; XMP biosynthesis via salvage pathway; XMP from xanthine: step 1/1. Functionally, purine salvage pathway enzyme that catalyzes the transfer of the ribosyl-5-phosphate group from 5-phospho-alpha-D-ribose 1-diphosphate (PRPP) to the N9 position of the 6-oxopurines guanine and xanthine to form the corresponding ribonucleotides GMP (guanosine 5'-monophosphate) and XMP (xanthosine 5'-monophosphate), with the release of PPi. To a lesser extent, also acts on hypoxanthine. This Oleidesulfovibrio alaskensis (strain ATCC BAA-1058 / DSM 17464 / G20) (Desulfovibrio alaskensis) protein is Xanthine-guanine phosphoribosyltransferase.